A 1630-amino-acid polypeptide reads, in one-letter code: Histone transcription regulator 3 homolog (1630 aa).

One copy of the TPR 1 repeat lies at 8 to 42 (NAASEDLDKEKRTLEIRIEEAVQIYQNALSAQKQG). Positions 325-347 (KDIVPPPSDNLPKPQLLKRPIDD) are disordered. One copy of the TPR 2 repeat lies at 1230-1263 (WRALYMLGKACRKCGDMENALVHFEAAAALAPTK).

Belongs to the HIR3 family. As to quaternary structure, interacts with hip1 and slm9.

It is found in the nucleus. Functionally, has a role in a nucleosome assembly pathway that is required for the integrity of heterochromatin and proper chromosome segregation. Required for transcriptional silencing in the outer repeat (otr) region of centromeric repeats and the Tf2 long terminal repeat retrotransposons. This chain is Histone transcription regulator 3 homolog (hip3), found in Schizosaccharomyces pombe (strain 972 / ATCC 24843) (Fission yeast).